Here is a 105-residue protein sequence, read N- to C-terminus: Protein AlbB (105 aa).

Its function is as follows. Involved in the biosynthesis of albonoursin (cyclo[(alpha,beta-dehydro-Phe)-(alpha,beta-dehydro-Leu)]), an antibacterial peptide. AlbB is essential for cyclic dipeptide oxidase AlbA (CDO) activity. This is Protein AlbB (albB) from Streptomyces noursei (Streptomyces albulus).